The following is a 345-amino-acid chain: Phenylalanine--tRNA ligase alpha subunit (345 aa).

Glutamate 272 provides a ligand contact to Mg(2+).

It belongs to the class-II aminoacyl-tRNA synthetase family. Phe-tRNA synthetase alpha subunit type 1 subfamily. Tetramer of two alpha and two beta subunits. Mg(2+) is required as a cofactor.

The protein resides in the cytoplasm. The catalysed reaction is tRNA(Phe) + L-phenylalanine + ATP = L-phenylalanyl-tRNA(Phe) + AMP + diphosphate + H(+). This chain is Phenylalanine--tRNA ligase alpha subunit, found in Prochlorococcus marinus (strain MIT 9312).